Consider the following 686-residue polypeptide: MNDTWRSRLKEISHITADPFLRDFHKLHTNDKEQIYSILHNPDNVVEQTFKNTIIKSMEESMFRPLIPTQQMKRRQNDHHNQGPPPKVQKSTVDSLKSQHQIDQQNLDWFLSQPLEDLEVMTVPEQYPLTVPAVLPLAELYYLTQTLASIKLLPGSHKVLMTENFESALAEGKIAVLYSRIEELKRQGKWSLRQPQKFYDPFKFIRKSKKKSFHWDYLLQEGKWMADDFRESSKYKKWCCVVIAEAVEQYWKGRKVSHQTFVDVADLKKIDKSIIRNLPVYTGLGGDSREPPIATVSKLVYPAEDNHWYKIALKPHHHHHRHQTTHQGLFGSTRKYNTLKPPKPPTPKNIEYRIPTIWLPEDDKRLIHYVAEFCFNWDLISEHISSSSTAVSLKKYESNIERRTPWQCFERYIQLNDKFQFSDMKGVYAYHAQQWLEQAHRAQSTTKRRISPLGVGPESVQRGNRKLRWASMFDAMRKAMKKREIAAAKVNHRKSTAELQANQNVTEPKPNSDRIPTPAELSRLKFERDKTLHENHINQQATRARMVQAVAKPAPAPAPAPPPPPPPKPVKRPTTPNGTPLTNEQIQHLLQMQKHRRMLQQQQQQQQQQQHQQQQRRIHFPPAQVSKVINDIQQQNPGLSKDQVTKLAAQYLASLSQQGYGVPSSPVPPHQKNQTASPMSGSPNNA.

A disordered region spans residues 71–97; the sequence is QMKRRQNDHHNQGPPPKVQKSTVDSLK. The HSA domain occupies 202 to 280; the sequence is FKFIRKSKKK…DKSIIRNLPV (79 aa). The 65-residue stretch at 354-418 folds into the Myb-like domain; sequence IPTIWLPEDD…FERYIQLNDK (65 aa). Disordered stretches follow at residues 493–517, 544–617, and 657–686; these read RKSTAELQANQNVTEPKPNSDRIPT, ARMV…QQRR, and QQGYGVPSSPVPPHQKNQTASPMSGSPNNA. Positions 497–506 are enriched in polar residues; the sequence is AELQANQNVT. Pro residues predominate over residues 554–568; it reads APAPAPAPPPPPPPK. Positions 574-588 are enriched in polar residues; that stretch reads TTPNGTPLTNEQIQH. The segment covering 599–613 has biased composition (low complexity); the sequence is LQQQQQQQQQQQHQQ. The segment covering 671–686 has biased composition (polar residues); sequence QKNQTASPMSGSPNNA.

It belongs to the EAF1 family. In terms of assembly, component of the NuA4 histone acetyltransferase complex.

The protein resides in the nucleus. Functionally, component of the NuA4 histone acetyltransferase complex which is involved in transcriptional activation of selected genes principally by acetylation of nucleosomal histone H4 and H2A. The NuA4 complex is also involved in DNA repair. This chain is Chromatin modification-related protein EAF1 (VID21), found in Candida albicans (strain SC5314 / ATCC MYA-2876) (Yeast).